Consider the following 90-residue polypeptide: Small ribosomal subunit protein uS15 (90 aa).

It belongs to the universal ribosomal protein uS15 family. As to quaternary structure, part of the 30S ribosomal subunit. Forms a bridge to the 50S subunit in the 70S ribosome, contacting the 23S rRNA.

Functionally, one of the primary rRNA binding proteins, it binds directly to 16S rRNA where it helps nucleate assembly of the platform of the 30S subunit by binding and bridging several RNA helices of the 16S rRNA. Forms an intersubunit bridge (bridge B4) with the 23S rRNA of the 50S subunit in the ribosome. In Aquifex aeolicus (strain VF5), this protein is Small ribosomal subunit protein uS15.